We begin with the raw amino-acid sequence, 114 residues long: RutC family protein YoaB (114 aa).

This sequence belongs to the RutC family.

This is RutC family protein YoaB (yoaB) from Escherichia coli O6:H1 (strain CFT073 / ATCC 700928 / UPEC).